The chain runs to 138 residues: Acidic phospholipase A2 Cvv-E6b (138 aa).

The signal sequence occupies residues 1–16 (MRTLWILAVLLLGVEG). 7 disulfide bridges follow: Cys-42–Cys-131, Cys-44–Cys-60, Cys-59–Cys-111, Cys-65–Cys-138, Cys-66–Cys-104, Cys-73–Cys-97, and Cys-91–Cys-102. Residues Tyr-43, Gly-45, and Gly-47 each contribute to the Ca(2+) site. His-63 is a catalytic residue. Ca(2+) is bound at residue Asp-64. Residue Asp-105 is part of the active site.

It depends on Ca(2+) as a cofactor. As to expression, expressed by the venom gland.

The protein resides in the secreted. It catalyses the reaction a 1,2-diacyl-sn-glycero-3-phosphocholine + H2O = a 1-acyl-sn-glycero-3-phosphocholine + a fatty acid + H(+). In terms of biological role, snake venom phospholipase A2 (PLA2) that shows very low inhibition of ADP-induced platelet aggregation in platelet-rich plasma of human, rabbit and guinea pig. PLA2 catalyzes the calcium-dependent hydrolysis of the 2-acyl groups in 3-sn-phosphoglycerides. This is Acidic phospholipase A2 Cvv-E6b from Crotalus viridis viridis (Prairie rattlesnake).